Reading from the N-terminus, the 99-residue chain is DNA-directed RNA polymerase subunit omega (99 aa).

This sequence belongs to the RNA polymerase subunit omega family. In terms of assembly, the RNAP catalytic core consists of 2 alpha, 1 beta, 1 beta' and 1 omega subunit. When a sigma factor is associated with the core the holoenzyme is formed, which can initiate transcription.

It catalyses the reaction RNA(n) + a ribonucleoside 5'-triphosphate = RNA(n+1) + diphosphate. Promotes RNA polymerase assembly. Latches the N- and C-terminal regions of the beta' subunit thereby facilitating its interaction with the beta and alpha subunits. In Deinococcus deserti (strain DSM 17065 / CIP 109153 / LMG 22923 / VCD115), this protein is DNA-directed RNA polymerase subunit omega.